A 74-amino-acid chain; its full sequence is MFCEPKNLVVLRQLSRQASVKVGKTWTGTKKRAQRIFIFILELLLEFCRGEDSVDGKNKSTTALPAVKDSVKDS.

The Cytoplasmic portion of the chain corresponds to 1–35; that stretch reads MFCEPKNLVVLRQLSRQASVKVGKTWTGTKKRAQR. Phosphoserine; by host occurs at positions 15 and 19. T29 is subject to Phosphothreonine; by host. The chain crosses the membrane as a helical; Signal-anchor for type II membrane protein span at residues 36 to 52; it reads IFIFILELLLEFCRGED. The Extracellular portion of the chain corresponds to 53-74; the sequence is SVDGKNKSTTALPAVKDSVKDS.

Belongs to the polyomavirus agnoprotein family. Homooligomer. Interacts with VP1. Interacts with large T antigen; this interaction may impact upon the activity of T-antigen on the control of viral gene transcription and replication. Interacts with small t antigen. Interacts with host CBX5; this interaction induces the dissociation of CBX5 from LBR, resulting in destabilization of the nuclear envelope. Post-translationally, phosphorylated by host kinase. Phosphorylation segregates agnoprotein in cytoplasm, whereas unphosphorylated agnoprotein migrate to the nucleus.

The protein resides in the host cytoplasm. It is found in the host nucleus membrane. Its subcellular location is the host rough endoplasmic reticulum membrane. The protein localises to the host cell membrane. Functionally, alters the structure of the nuclear envelope by interacting with host CBX5 and disrupting CBX5 association with LBR. Involved in the perinuclear-nuclear localization of the capsid protein VP1 during virion assembly and maturation. Plays an important role in the release of progeny virions from infected cells and in viral propagation, probably by acting as a viral ionic channel in the host plasma membrane. Allows influx of extracellular calcium ions in the host cell. May contribute to viral genome transcription and translation of viral late proteins. The sequence is that of Agnoprotein from Homo sapiens (Human).